Reading from the N-terminus, the 152-residue chain is Urease accessory protein UreE (152 aa).

Belongs to the UreE family.

Its subcellular location is the cytoplasm. Its function is as follows. Involved in urease metallocenter assembly. Binds nickel. Probably functions as a nickel donor during metallocenter assembly. This chain is Urease accessory protein UreE, found in Psychromonas ingrahamii (strain DSM 17664 / CCUG 51855 / 37).